Reading from the N-terminus, the 470-residue chain is Ubiquitin carboxyl-terminal hydrolase calypso (470 aa).

Residues 43–274 (GWLELESDPG…IRFNLMAVVP (232 aa)) form the UCH catalytic domain. The Nucleophile role is filled by Cys129. His211 functions as the Proton donor in the catalytic mechanism. The segment at 305–324 (DEQGEGGNGDPQRPDTPSTL) is disordered. A ULD domain is found at 373–401 (NYDKFICTFLSMLAHQGVLGELVSQHLLP). The segment at 403–470 (KKISGQSAAN…KGRNKCKKRK (68 aa)) is positively charged C-terminal tail required for binding nucleosomes. The segment covering 422–451 (ANAGATAAGAAGAAPKSQQQQAAAAKNGKS) has biased composition (low complexity). The segment at 422 to 470 (ANAGATAAGAAGAAPKSQQQQAAAAKNGKSPSKTPGRRRKGRNKCKKRK) is disordered. Over residues 456 to 470 (PGRRRKGRNKCKKRK) the composition is skewed to basic residues.

It belongs to the peptidase C12 family. BAP1 subfamily. In terms of assembly, catalytic component of the polycomb repressive deubiquitinase (PR-DUB) complex, at least composed of caly/calypso, Asx and sba (MBD5/6 homolog). The PR-DUB complex associates with nucleosomes to mediate deubiquitination of histone H2AK118ub1 substrates; the association requires the positively charged C-terminal tail of caly, probably due to direct binding of DNA. Interacts (via ULD domain) with Asx (via DEUBAD domain); the interaction produces a stable heterodimer with a composite binding site for ubiquitin. Homodimerizes (via coiled-coil hinge-region between the UCH and ULD domains) to mediate assembly of 2 copies of the caly-Asx heterodimer into a bisymmetric tetramer; dimerization enhances PR-DUB association with nucleosomes.

Its subcellular location is the nucleus. It catalyses the reaction Thiol-dependent hydrolysis of ester, thioester, amide, peptide and isopeptide bonds formed by the C-terminal Gly of ubiquitin (a 76-residue protein attached to proteins as an intracellular targeting signal).. Functionally, catalytic component of the polycomb repressive deubiquitinase (PR-DUB) complex, a complex that specifically mediates deubiquitination of histone H2A monoubiquitinated at 'Lys-119' (H2AK118ub1). Mediates bisymmetric organization of the PR-DUB complex and is involved in association with nucleosomes to mediate deubiquitination. Does not deubiquitinate monoubiquitinated histone H2B. Required to maintain the transcriptionally repressive state of homeotic genes throughout development. The PR-DUB complex has weak or no activity toward 'Lys-48'- and 'Lys-63'-linked polyubiquitin chains. Polycomb group (PcG) protein. The protein is Ubiquitin carboxyl-terminal hydrolase calypso of Drosophila ananassae (Fruit fly).